Consider the following 236-residue polypeptide: Activating transcription factor of chaperone (236 aa).

Residues 117–185 form a disordered region; the sequence is HRASQLASPQ…KNAATRYRQK (69 aa). The segment covering 120 to 137 has biased composition (low complexity); it reads SQLASPQHSSSSANASPR. Residues 162-175 are compositionally biased toward basic and acidic residues; sequence RPVDDRRSRKKEQN. The bZIP domain maps to 165 to 228; sequence DDRRSRKKEQ…RYLKALMRDL (64 aa). The segment at 167 to 187 is basic motif; it reads RRSRKKEQNKNAATRYRQKKK. The leucine-zipper stretch occupies residues 193–228; it reads LLKEEQTLRQRHTELGEKCSDLQREIRYLKALMRDL.

It belongs to the bZIP family. In terms of assembly, binds DNA as a dimer.

The protein resides in the nucleus. Its function is as follows. Transcriptional activator that acts in the unfolded protein response (UPR) pathway. Acts during endoplasmic reticulum (ER) stress by activating UPR target genes via direct binding to the UPR element (UPRE) (5'-GGAACTGGACAGCGTGTCGAAA-3'). Activates expression of ER chaperones ERP72 and PDI. This is Activating transcription factor of chaperone from Bombyx mori (Silk moth).